An 842-amino-acid polypeptide reads, in one-letter code: ATP-binding cassette sub-family B member 6 (842 aa).

Residues M1–C26 are Lumenal-facing. The tract at residues M1–W205 is required for the lysosomal targeting. A required for ATPase activity region spans residues M1–T236. C8 and C26 are joined by a disulfide. Residues F27–V47 form a helical membrane-spanning segment. Residues L48–P72 are Cytoplasmic-facing. Residues Y73–G93 form a helical membrane-spanning segment. Residues R94–Y106 are Lumenal-facing. A helical membrane pass occupies residues L107–A127. The Cytoplasmic segment spans residues E128–S147. A helical membrane pass occupies residues S148 to W168. The Lumenal portion of the chain corresponds to N169 to Q185. A helical transmembrane segment spans residues F186–A206. The Cytoplasmic segment spans residues P207 to F263. The chain crosses the membrane as a helical span at residues I264 to I284. One can recognise an ABC transmembrane type-1 domain in the interval V265 to T556. At F285–T305 the chain is on the lumenal side. Residues V306–V326 form a helical membrane-spanning segment. The Cytoplasmic portion of the chain corresponds to S327–R375. A helical membrane pass occupies residues G376 to A396. Residue D397 is a topological domain, lumenal. Residues I398–F418 form a helical membrane-spanning segment. Topologically, residues L419–Q499 are cytoplasmic. The helical transmembrane segment at T500 to V520 threads the bilayer. Residues S521–D529 are Lumenal-facing. A helical membrane pass occupies residues F530 to Y550. The Cytoplasmic segment spans residues Y551–A842. The 235-residue stretch at I590–L824 folds into the ABC transporter domain. ATP is bound at residue G623–S630.

Belongs to the ABC transporter superfamily. ABCB family. Heavy Metal importer (TC 3.A.1.210) subfamily. In terms of assembly, homodimer. In terms of processing, N-glycosylated. In terms of tissue distribution, highly expressed in the liver, adrenal glands, and testis.

The protein resides in the cell membrane. The protein localises to the mitochondrion outer membrane. It localises to the endoplasmic reticulum membrane. It is found in the golgi apparatus membrane. Its subcellular location is the endosome membrane. The protein resides in the lysosome membrane. The protein localises to the late endosome membrane. It localises to the early endosome membrane. It is found in the secreted. Its subcellular location is the extracellular exosome. The protein resides in the mitochondrion. The protein localises to the endosome. It localises to the multivesicular body membrane. It is found in the melanosome membrane. The catalysed reaction is heme b(in) + ATP + H2O = heme b(out) + ADP + phosphate + H(+). It carries out the reaction coproporphyrin III(in) + ATP + H2O = coproporphyrin III(out) + ADP + phosphate + H(+). It catalyses the reaction pheophorbide a(in) + ATP + H2O = pheophorbide a(out) + ADP + phosphate + H(+). The enzyme catalyses coproporphyrinogen III(in) + ATP + H2O = coproporphyrinogen III(out) + ADP + phosphate + H(+). The catalysed reaction is protoporphyrin IX(in) + ATP + H2O = protoporphyrin IX(out) + ADP + phosphate + H(+). It carries out the reaction coproporphyrin I(in) + ATP + H2O = coproporphyrin I(out) + ADP + phosphate + H(+). It catalyses the reaction uroporphyrin I(in) + ATP + H2O = uroporphyrin I(out) + ADP + phosphate + H(+). The enzyme catalyses uroporphyrin III(in) + ATP + H2O = uroporphyrin III(out) + ADP + phosphate + H(+). Its function is as follows. ATP-dependent transporter that catalyzes the transport of a broad-spectrum of porphyrins from the cytoplasm to the extracellular space through the plasma membrane or into the vesicle lumen. May also function as an ATP-dependent importer of porphyrins from the cytoplasm into the mitochondria, in turn may participate in the de novo heme biosynthesis regulation and in the coordination of heme and iron homeostasis during phenylhydrazine stress. May also play a key role in the early steps of melanogenesis producing PMEL amyloid fibrils. In vitro, it confers to cells a resistance to toxic metal such as arsenic and cadmium and against chemotherapeutics agent such as 5-fluorouracil, SN-38 and vincristin. In addition may play a role in the transition metal homeostasis. This chain is ATP-binding cassette sub-family B member 6, found in Mesocricetus auratus (Golden hamster).